Here is a 153-residue protein sequence, read N- to C-terminus: SKP1-like protein 5 (153 aa).

The tract at residues 90 to 153 (MMAANYLNIQ…IREENQWAFQ (64 aa)) is interaction with the F-box domain of F-box proteins.

The protein belongs to the SKP1 family. As to quaternary structure, part of a SCF (SKP1-cullin-F-box) protein ligase complex. Interacts with PP2A13. Restricted to inflorescences, especially in the inflorescence meristem (IM).

The protein localises to the nucleus. Its pathway is protein modification; protein ubiquitination. Involved in ubiquitination and subsequent proteasomal degradation of target proteins. Together with CUL1, RBX1 and a F-box protein, it forms a SCF E3 ubiquitin ligase complex. The functional specificity of this complex depends on the type of F-box protein. In the SCF complex, it serves as an adapter that links the F-box protein to CUL1. This is SKP1-like protein 5 (ASK5) from Arabidopsis thaliana (Mouse-ear cress).